Reading from the N-terminus, the 319-residue chain is Protein sprouty homolog 1 (319 aa).

Residue Met-1 is modified to N-acetylmethionine. The disordered stretch occupies residues 54–157; it reads TEGPSVVKRP…HRSERAIRTQ (104 aa). Residues 69 to 79 are compositionally biased toward basic and acidic residues; sequence PRQEKHERTHE. Residues 112–131 show a composition bias toward low complexity; the sequence is SRSTSTGSAASSGSNSSASS. Residues 183-295 enclose the SPR domain; sequence QCGKCKCGEC…CYDWIHRPGC (113 aa).

This sequence belongs to the sprouty family. As to quaternary structure, forms heterodimers with SPRY2. Interacts with TESK1. Interacts with CAV1 (via C-terminus).

The protein resides in the cytoplasm. The protein localises to the membrane. Its function is as follows. Inhibits fibroblast growth factor (FGF)-induced retinal lens fiber differentiation, probably by inhibiting FGF-mediated phosphorylation of ERK1/2. Inhibits TGFB-induced epithelial-to-mesenchymal transition in lens epithelial cells. The chain is Protein sprouty homolog 1 (SPRY1) from Bos taurus (Bovine).